The sequence spans 241 residues: Methylthioribulose-1-phosphate dehydratase (241 aa).

Residues 1 to 12 (MSQEITQKDNND) show a composition bias toward basic and acidic residues. The tract at residues 1–22 (MSQEITQKDNNDHLVQSSDPDH) is disordered. Cysteine 101 provides a ligand contact to substrate. 2 residues coordinate Zn(2+): histidine 118 and histidine 120. The active-site Proton donor/acceptor is the glutamate 147. Residue histidine 203 coordinates Zn(2+).

This sequence belongs to the aldolase class II family. MtnB subfamily. Zn(2+) serves as cofactor.

It localises to the cytoplasm. The enzyme catalyses 5-(methylsulfanyl)-D-ribulose 1-phosphate = 5-methylsulfanyl-2,3-dioxopentyl phosphate + H2O. The protein operates within amino-acid biosynthesis; L-methionine biosynthesis via salvage pathway; L-methionine from S-methyl-5-thio-alpha-D-ribose 1-phosphate: step 2/6. Its function is as follows. Catalyzes the dehydration of methylthioribulose-1-phosphate (MTRu-1-P) into 2,3-diketo-5-methylthiopentyl-1-phosphate (DK-MTP-1-P). The chain is Methylthioribulose-1-phosphate dehydratase from Aspergillus terreus (strain NIH 2624 / FGSC A1156).